A 152-amino-acid polypeptide reads, in one-letter code: Transcriptional regulator MraZ (152 aa).

SpoVT-AbrB domains are found at residues 5 to 52 and 81 to 124; these read ASAV…PLNQ and ATEC…SESE.

The protein belongs to the MraZ family. In terms of assembly, forms oligomers.

Its subcellular location is the cytoplasm. The protein localises to the nucleoid. This Histophilus somni (strain 2336) (Haemophilus somnus) protein is Transcriptional regulator MraZ.